The sequence spans 182 residues: MAKDVHVVERVEVPEGVTVSIDGMRVKVSGPKGEVERDFSHARGVLIRLEDNSVVVESFFAKARQRALVGAIAGHIRNMIKGVQGGFRYKLKIMYSHFPINVKVEGDKFIISNFLGEKGLRIARIMPGVKVQVKGSDVIVEGIDVEKVAQTAANIELATKVKDKDRRKFMDGIYIYEREVIA.

It belongs to the universal ribosomal protein uL6 family. In terms of assembly, part of the 50S ribosomal subunit.

Its function is as follows. This protein binds to the 23S rRNA, and is important in its secondary structure. It is located near the subunit interface in the base of the L7/L12 stalk, and near the tRNA binding site of the peptidyltransferase center. In Aeropyrum pernix (strain ATCC 700893 / DSM 11879 / JCM 9820 / NBRC 100138 / K1), this protein is Large ribosomal subunit protein uL6.